The chain runs to 373 residues: Dual-specificity RNA methyltransferase RlmN (373 aa).

Glu94 (proton acceptor) is an active-site residue. One can recognise a Radical SAM core domain in the interval 100–339 (DGDRATLCVS…VTVRKTRGDD (240 aa)). Cys107 and Cys344 are disulfide-bonded. Residues Cys114, Cys118, and Cys121 each coordinate [4Fe-4S] cluster. Residues 168-169 (GE), Ser200, 222-224 (SLH), and Asn301 each bind S-adenosyl-L-methionine. Residue Cys344 is the S-methylcysteine intermediate of the active site.

The protein belongs to the radical SAM superfamily. RlmN family. The cofactor is [4Fe-4S] cluster.

It localises to the cytoplasm. The enzyme catalyses adenosine(2503) in 23S rRNA + 2 reduced [2Fe-2S]-[ferredoxin] + 2 S-adenosyl-L-methionine = 2-methyladenosine(2503) in 23S rRNA + 5'-deoxyadenosine + L-methionine + 2 oxidized [2Fe-2S]-[ferredoxin] + S-adenosyl-L-homocysteine. The catalysed reaction is adenosine(37) in tRNA + 2 reduced [2Fe-2S]-[ferredoxin] + 2 S-adenosyl-L-methionine = 2-methyladenosine(37) in tRNA + 5'-deoxyadenosine + L-methionine + 2 oxidized [2Fe-2S]-[ferredoxin] + S-adenosyl-L-homocysteine. Functionally, specifically methylates position 2 of adenine 2503 in 23S rRNA and position 2 of adenine 37 in tRNAs. m2A2503 modification seems to play a crucial role in the proofreading step occurring at the peptidyl transferase center and thus would serve to optimize ribosomal fidelity. This chain is Dual-specificity RNA methyltransferase RlmN, found in Photobacterium profundum (strain SS9).